The chain runs to 249 residues: Triosephosphate isomerase (249 aa).

Substrate contacts are provided by Asn-12 and Lys-14. The residue at position 14 (Lys-14) is an N6-acetyllysine. Residue Tyr-68 is modified to 3'-nitrotyrosine. Ser-80 carries the post-translational modification Phosphoserine. His-96 functions as the Electrophile in the catalytic mechanism. Residue Ser-106 is modified to Phosphoserine. Residue Lys-142 forms a Glycyl lysine isopeptide (Lys-Gly) (interchain with G-Cter in SUMO1) linkage. N6-succinyllysine is present on Lys-149. Lys-156 is subject to N6-acetyllysine; alternate. Lys-156 bears the N6-succinyllysine; alternate mark. Ser-159 bears the Phosphoserine mark. Glu-166 functions as the Proton acceptor in the catalytic mechanism. Thr-173 is subject to Phosphothreonine. Lys-194 bears the N6-acetyllysine; alternate mark. Lys-194 is subject to N6-succinyllysine; alternate. Lys-194 is subject to N6-methyllysine; alternate. Ser-198 carries the post-translational modification Phosphoserine. Tyr-209 is subject to 3'-nitrotyrosine. Ser-212 carries the phosphoserine modification. Thr-214 is subject to Phosphothreonine. At Ser-223 the chain carries Phosphoserine. Position 238 is an N6-acetyllysine (Lys-238).

Belongs to the triosephosphate isomerase family. As to quaternary structure, homodimer.

The protein localises to the cytoplasm. It catalyses the reaction dihydroxyacetone phosphate = methylglyoxal + phosphate. It carries out the reaction D-glyceraldehyde 3-phosphate = dihydroxyacetone phosphate. It functions in the pathway carbohydrate degradation; glycolysis; D-glyceraldehyde 3-phosphate from glycerone phosphate: step 1/1. Its pathway is carbohydrate biosynthesis; gluconeogenesis. Its function is as follows. Triosephosphate isomerase is an extremely efficient metabolic enzyme that catalyzes the interconversion between dihydroxyacetone phosphate (DHAP) and D-glyceraldehyde-3-phosphate (G3P) in glycolysis and gluconeogenesis. In terms of biological role, it is also responsible for the non-negligible production of methylglyoxal a reactive cytotoxic side-product that modifies and can alter proteins, DNA and lipids. The chain is Triosephosphate isomerase (TPI1) from Pongo abelii (Sumatran orangutan).